The sequence spans 262 residues: Ribosomal RNA small subunit methyltransferase A (262 aa).

The S-adenosyl-L-methionine site is built by histidine 19, leucine 21, glycine 44, glutamate 65, aspartate 90, and asparagine 109. Positions 218-246 are disordered; sequence LPNNLPGPLRERAEEALAGLGHGPDARAE.

Belongs to the class I-like SAM-binding methyltransferase superfamily. rRNA adenine N(6)-methyltransferase family. RsmA subfamily.

It localises to the cytoplasm. It carries out the reaction adenosine(1518)/adenosine(1519) in 16S rRNA + 4 S-adenosyl-L-methionine = N(6)-dimethyladenosine(1518)/N(6)-dimethyladenosine(1519) in 16S rRNA + 4 S-adenosyl-L-homocysteine + 4 H(+). Its function is as follows. Specifically dimethylates two adjacent adenosines (A1518 and A1519) in the loop of a conserved hairpin near the 3'-end of 16S rRNA in the 30S particle. May play a critical role in biogenesis of 30S subunits. The protein is Ribosomal RNA small subunit methyltransferase A of Rubrobacter xylanophilus (strain DSM 9941 / JCM 11954 / NBRC 16129 / PRD-1).